Consider the following 216-residue polypeptide: Probable GTP-binding protein EngB (216 aa).

An EngB-type G domain is found at 23–197; sequence EGAEIAFAGR…EHKVAGWLGL (175 aa). GTP contacts are provided by residues 31–38, 58–62, 76–79, 143–146, and 176–178; these read GRSNAGKS, GRTQL, DLPG, TKCD, and FSS. 2 residues coordinate Mg(2+): Ser38 and Thr60.

Belongs to the TRAFAC class TrmE-Era-EngA-EngB-Septin-like GTPase superfamily. EngB GTPase family. Requires Mg(2+) as cofactor.

Necessary for normal cell division and for the maintenance of normal septation. The sequence is that of Probable GTP-binding protein EngB from Aromatoleum aromaticum (strain DSM 19018 / LMG 30748 / EbN1) (Azoarcus sp. (strain EbN1)).